The sequence spans 428 residues: Glial fibrillary acidic protein (428 aa).

The segment at 1 to 68 is head; that stretch reads MERRRVTSAT…KETRASERAE (68 aa). At Thr7 the chain carries Phosphothreonine; by AURKB and ROCK1. At Arg12 the chain carries Omega-N-methylarginine. Ser13 bears the Phosphoserine; by AURKB and ROCK1 mark. Citrulline occurs at positions 26 and 32. Ser34 carries the post-translational modification Phosphoserine; by AURKB and ROCK1. The IF rod domain occupies 65–373; that stretch reads ERAEMMELND…KLLEGEENRI (309 aa). The tract at residues 69 to 100 is coil 1A; sequence MMELNDRFASYIEKVRFLEQQNKALAAELNQL. Ser78 is modified (phosphoserine). Positions 101–111 are linker 1; the sequence is RAKEPTKLADV. Phosphothreonine is present on residues Thr106 and Thr146. Residues 112-210 are coil 1B; sequence YQAELRELRL…EEEVRELQEQ (99 aa). The interval 211–226 is linker 12; sequence LAQQQVHVEMDVAKPD. Residues 227–248 are coil 2A; the sequence is LTAALREIRTQYEAVASSNMHE. The interval 249 to 252 is linker 2; sequence AEEW. A coil 2B region spans residues 253–373; sequence YRSKFADLND…KLLEGEENRI (121 aa). Arg266 carries the citrulline modification. At Ser319 the chain carries Phosphoserine. The tract at residues 374 to 428 is tail; that stretch reads TIPVQTFSNLQIRETSLDTKSVSEGHLKRNIVVKTVEMRDGEVIKESKQEHKDVM. Residue Thr379 is modified to Phosphothreonine. Phosphoserine is present on Ser381. Citrulline is present on residues Arg402 and Arg412.

This sequence belongs to the intermediate filament family. As to quaternary structure, interacts with SYNM. Post-translationally, phosphorylated by PKN1.

It localises to the cytoplasm. GFAP, a class-III intermediate filament, is a cell-specific marker that, during the development of the central nervous system, distinguishes astrocytes from other glial cells. The protein is Glial fibrillary acidic protein (GFAP) of Bos taurus (Bovine).